The primary structure comprises 311 residues: Glycosyltransferase 6 domain-containing protein 1 (311 aa).

The Cytoplasmic segment spans residues 1–5; the sequence is MKAKG. Residues 6 to 26 form a helical; Signal-anchor for type II membrane protein membrane-spanning segment; that stretch reads RILLLTSCLFLLLLLLAKIHL. Residues 27 to 311 are Lumenal-facing; that stretch reads RNHQEEELPL…KVAHYPTDDL (285 aa). The N-linked (GlcNAc...) asparagine glycan is linked to Asn-77. Residues 85–90, 176–178, and 198–201 each bind substrate; these read FAVSSF, SVN, and HAWW. Glu-266 acts as the Nucleophile in catalysis.

This sequence belongs to the glycosyltransferase 6 family. Mn(2+) serves as cofactor.

The protein resides in the membrane. This Rattus norvegicus (Rat) protein is Glycosyltransferase 6 domain-containing protein 1 (Glt6d1).